A 775-amino-acid chain; its full sequence is Tumor necrosis factor alpha-induced protein 3 (775 aa).

A2 is subject to N-acetylalanine. Residues 58 to 300 (PQFREIIHKA…LTDPENEMKE (243 aa)) form a TRAF-binding region. The region spanning 92 to 263 (LVALKTNGDG…SQHFVPLVTL (172 aa)) is the OTU domain. D100 is an active-site residue. Residue C103 is the Nucleophile of the active site. Interaction with ubiquitin regions lie at residues 157–159 (LCY), 190–192 (SLE), and 224–227 (FAPL). H256 (proton acceptor) is an active-site residue. Residues 369 to 775 (AQNPLEPSTP…ECYQFKQMYG (407 aa)) form an interaction with TNIP1 region. The A20-type 1 zinc finger occupies 381 to 416 (SLMDIKCETPNCPFFMSVNTQPLCHECSERRQKNQS). The segment at 386 to 445 (KCETPNCPFFMSVNTQPLCHECSERRQKNQSKLPKLNSKLGPEGLPGVGLGSSNWSPEET) is interaction with RIPK1. Residues C387, C392, C404, and C407 each contribute to the Zn(2+) site. Residues 415 to 455 (QSKLPKLNSKLGPEGLPGVGLGSSNWSPEETAGGPHSAPPT) are disordered. S451 carries the phosphoserine modification. A20-type zinc fingers lie at residues 464 to 499 (ETTAMKCRSPGCPFTLNVQHNGFCERCHARQINASH) and 500 to 533 (TADPGKCQACLQDVTRTFNGICSTCFKRTTAEPS). Residues C470, C475, C487, C490, C506, C509, C521, and C524 each coordinate Zn(2+). Polar residues predominate over residues 567-580 (TGNVSPSGCLSQAA). Residues 567–590 (TGNVSPSGCLSQAARTPGDRAGTS) form a disordered region. 4 consecutive A20-type zinc fingers follow at residues 586–621 (RAGTSKCRKAGCMYFGTPENKGFCTLCFIEYRENKQ), 636–671 (FQNNVPCLGRECGTLGSTMFEGYCQKCFIEAQNQRF), 695–730 (VASRLKCARASCKNILACRSEELCMECQHLSQRVGS), and 741–775 (EPPKQRCRAPACDHFGNAKCNGYCNECYQFKQMYG). The segment at 590-640 (SKCRKAGCMYFGTPENKGFCTLCFIEYRENKQSVTASEKAGSPAPRFQNNV) is required for proteasomal degradation of UBE2N and UBE2D3, TRAF6 deubiquitination, and TAX1BP1 interaction with UBE2N. The interval 591–775 (KCRKAGCMYF…ECYQFKQMYG (185 aa)) is sufficient for inhibitory activity of TNF-induced NF-kappa-B activity. Residues C592, C597, C609, C612, C642, C647, C659, C662, C701, C706, C718, C721, C747, C752, C764, and C767 each contribute to the Zn(2+) site. Positions 682-775 (RSSQHRDMPR…ECYQFKQMYG (94 aa)) are required for lysosomal localization and for TRAF2 lysosomal degradation.

This sequence belongs to the peptidase C64 family. In terms of assembly, homodimer. Interacts with TNIP1, TAX1BP1 and TRAF2. Interacts with RNF11, ITCH and TAX1BP1 only after TNF stimulation; these interaction are transient and they are lost after 1 hour of stimulation with TNF. Interacts with YWHAZ and YWHAH. Interacts with IKBKG; the interaction is induced by TNF stimulation and by polyubiquitin. Interacts with RIPK1. Interacts with UBE2N; the interaction requires TAX1BP1. Interacts with TRAF6. As to expression, found in most tissues during development. Strikingly high levels are found in lymphoid organs, including the thymus, spleen, and gut-associated lymphoid tissue. Constitutively expressed in immature and mature thymocyte subpopulations as well as in resting peripheral T-cells; activation of these leads to down-regulation.

The protein localises to the cytoplasm. Its subcellular location is the nucleus. It is found in the lysosome. It carries out the reaction Thiol-dependent hydrolysis of ester, thioester, amide, peptide and isopeptide bonds formed by the C-terminal Gly of ubiquitin (a 76-residue protein attached to proteins as an intracellular targeting signal).. Functionally, ubiquitin-editing enzyme that contains both ubiquitin ligase and deubiquitinase activities. Involved in immune and inflammatory responses signaled by cytokines, such as TNF-alpha and IL-1 beta, or pathogens via Toll-like receptors (TLRs) through terminating NF-kappa-B activity. Essential component of a ubiquitin-editing protein complex, comprising also RNF11, ITCH and TAX1BP1, that ensures the transient nature of inflammatory signaling pathways. In cooperation with TAX1BP1 promotes disassembly of E2-E3 ubiquitin protein ligase complexes in IL-1R and TNFR-1 pathways; affected are at least E3 ligases TRAF6, TRAF2 and BIRC2, and E2 ubiquitin-conjugating enzymes UBE2N and UBE2D3. In cooperation with TAX1BP1 promotes ubiquitination of UBE2N and proteasomal degradation of UBE2N and UBE2D3. Upon TNF stimulation, deubiquitinates 'Lys-63'-polyubiquitin chains on RIPK1 and catalyzes the formation of 'Lys-48'-polyubiquitin chains. This leads to RIPK1 proteasomal degradation and consequently termination of the TNF- or LPS-mediated activation of NF-kappa-B. Deubiquitinates TRAF6 probably acting on 'Lys-63'-linked polyubiquitin. Upon T-cell receptor (TCR)-mediated T-cell activation, deubiquitinates 'Lys-63'-polyubiquitin chains on MALT1 thereby mediating disassociation of the CBM (CARD11:BCL10:MALT1) and IKK complexes and preventing sustained IKK activation. Deubiquitinates NEMO/IKBKG; the function is facilitated by TNIP1 and leads to inhibition of NF-kappa-B activation. Upon stimulation by bacterial peptidoglycans, probably deubiquitinates RIPK2. Can also inhibit I-kappa-B-kinase (IKK) through a non-catalytic mechanism which involves polyubiquitin; polyubiquitin promotes association with IKBKG and prevents IKK MAP3K7-mediated phosphorylation. Targets TRAF2 for lysosomal degradation. In vitro able to deubiquitinate 'Lys-11'-, 'Lys-48'- and 'Lys-63' polyubiquitin chains. Inhibitor of programmed cell death. Has a role in the function of the lymphoid system. Required for LPS-induced production of pro-inflammatory cytokines and IFN beta in LPS-tolerized macrophages. This chain is Tumor necrosis factor alpha-induced protein 3 (Tnfaip3), found in Mus musculus (Mouse).